The following is a 510-amino-acid chain: MIELTVAQIAEIVGGAVADISPQDAAHRRVTGTVEFDSRAIGPGGLFLRLPGARADGHDHAASAVAAGAAVVLAARPVGVPAIVVPPVAAPNVLAGVLEHDNDGSGAAVLAALAKLATAVAAQLVAGGLTIIGITGSSGKTSTKDLMAAVLAPLGEVVAPPGSFNNELGHPWTVLRATRRTDYLILEMAARHHGNIAALAEIAPPSIGVVLNVGTAHLGEFGSREVIAQTKAELPQAVPHSGAVVLNADDPAVAAMAKLTAARVVRVSRDNTGDVWAGPVSLDELARPRFTLHAHDAQAEVRLGVCGDHQVTNALCAAAVALECGASVEQVAAALTAAPPVSRHRMQVTTRGDGVTVIDDAYNANPDSMRAGLQALAWIAHQPEATRRSWAVLGEMAELGEDAIAEHDRIGRLAVRLDVSRLVVVGTGRSISAMHHGAVLEEAWGSGEATADHGADRTAVNVADGDAALALLRAELRPGDVVLVKASNAAGLGAVADALVADDTCGSVRP.

136-142 (GSSGKTS) contributes to the ATP binding site.

The protein belongs to the MurCDEF family. MurF subfamily.

It is found in the cytoplasm. It carries out the reaction D-alanyl-D-alanine + UDP-N-acetyl-alpha-D-muramoyl-L-alanyl-gamma-D-glutamyl-meso-2,6-diaminopimelate + ATP = UDP-N-acetyl-alpha-D-muramoyl-L-alanyl-gamma-D-glutamyl-meso-2,6-diaminopimeloyl-D-alanyl-D-alanine + ADP + phosphate + H(+). The protein operates within cell wall biogenesis; peptidoglycan biosynthesis. Its function is as follows. Involved in cell wall formation. Catalyzes the final step in the synthesis of UDP-N-acetylmuramoyl-pentapeptide, the precursor of murein. The sequence is that of UDP-N-acetylmuramoyl-tripeptide--D-alanyl-D-alanine ligase from Mycobacterium tuberculosis (strain CDC 1551 / Oshkosh).